A 275-amino-acid polypeptide reads, in one-letter code: Expansin-B6 (275 aa).

The signal sequence occupies residues Met1 to Cys25. N-linked (GlcNAc...) asparagine glycosylation is present at Asn33. In terms of domain architecture, Expansin-like EG45 spans Gly64–Leu170. 3 disulfide bridges follow: Cys67–Cys95, Cys98–Cys165, and Cys103–Cys109. One can recognise an Expansin-like CBD domain in the interval Val183–Ser270.

Belongs to the expansin family. Expansin B subfamily. Expressed in internodes.

It is found in the secreted. The protein localises to the cell wall. Its subcellular location is the membrane. Its function is as follows. May cause loosening and extension of plant cell walls by disrupting non-covalent bonding between cellulose microfibrils and matrix glucans. No enzymatic activity has been found. May be required for rapid internodal elongation in deepwater rice during submergence. The polypeptide is Expansin-B6 (EXPB6) (Oryza sativa subsp. japonica (Rice)).